Consider the following 298-residue polypeptide: 33 kDa chaperonin (298 aa).

2 disulfides stabilise this stretch: C239/C241 and C272/C275.

The protein belongs to the HSP33 family. Post-translationally, under oxidizing conditions two disulfide bonds are formed involving the reactive cysteines. Under reducing conditions zinc is bound to the reactive cysteines and the protein is inactive.

The protein localises to the cytoplasm. In terms of biological role, redox regulated molecular chaperone. Protects both thermally unfolding and oxidatively damaged proteins from irreversible aggregation. Plays an important role in the bacterial defense system toward oxidative stress. The chain is 33 kDa chaperonin from Picosynechococcus sp. (strain ATCC 27264 / PCC 7002 / PR-6) (Agmenellum quadruplicatum).